The primary structure comprises 82 residues: Small ribosomal subunit protein bS18 (82 aa).

Positions 1–25 (MADTSSSQARRPFHRRRKTCPFSGA) are disordered.

Belongs to the bacterial ribosomal protein bS18 family. In terms of assembly, part of the 30S ribosomal subunit. Forms a tight heterodimer with protein bS6.

In terms of biological role, binds as a heterodimer with protein bS6 to the central domain of the 16S rRNA, where it helps stabilize the platform of the 30S subunit. This is Small ribosomal subunit protein bS18 from Agrobacterium fabrum (strain C58 / ATCC 33970) (Agrobacterium tumefaciens (strain C58)).